Consider the following 469-residue polypeptide: Uronate isomerase (469 aa).

It belongs to the metallo-dependent hydrolases superfamily. Uronate isomerase family.

The enzyme catalyses D-glucuronate = D-fructuronate. The catalysed reaction is aldehydo-D-galacturonate = keto-D-tagaturonate. The protein operates within carbohydrate metabolism; pentose and glucuronate interconversion. The sequence is that of Uronate isomerase from Yersinia enterocolitica serotype O:8 / biotype 1B (strain NCTC 13174 / 8081).